Reading from the N-terminus, the 249-residue chain is Transcriptional activator protein EsaR (249 aa).

One can recognise an HTH luxR-type domain in the interval 174–239 (QSADKTIFSS…QAIRLGVELD (66 aa)). The segment at residues 198–217 (YAEIAAITGISVSTVKFHIK) is a DNA-binding region (H-T-H motif).

This sequence belongs to the autoinducer-regulated transcriptional regulatory protein family.

Functions as a potential OhlL-responsive transcriptional regulator. This is Transcriptional activator protein EsaR (esaR) from Pantoea stewartii subsp. stewartii (Erwinia stewartii).